The sequence spans 204 residues: Small ribosomal subunit protein uS7 (204 aa).

Met-1 is modified (N-acetylmethionine). Position 2 is an N-acetylthreonine; in 40S ribosomal protein S5, N-terminally processed (Thr-2). Position 14 is a phosphothreonine (Thr-14). Lys-47 is modified (N6-acetyllysine; alternate). A Glycyl lysine isopeptide (Lys-Gly) (interchain with G-Cter in SUMO2); alternate cross-link involves residue Lys-47. At Ser-142 the chain carries Phosphoserine.

Belongs to the universal ribosomal protein uS7 family. Component of the small ribosomal subunit. Part of the small subunit (SSU) processome, composed of more than 70 proteins and the RNA chaperone small nucleolar RNA (snoRNA) U3.

It localises to the cytoplasm. It is found in the nucleus. The protein resides in the nucleolus. Its function is as follows. Component of the small ribosomal subunit. The ribosome is a large ribonucleoprotein complex responsible for the synthesis of proteins in the cell. Part of the small subunit (SSU) processome, first precursor of the small eukaryotic ribosomal subunit. During the assembly of the SSU processome in the nucleolus, many ribosome biogenesis factors, an RNA chaperone and ribosomal proteins associate with the nascent pre-rRNA and work in concert to generate RNA folding, modifications, rearrangements and cleavage as well as targeted degradation of pre-ribosomal RNA by the RNA exosome. The polypeptide is Small ribosomal subunit protein uS7 (Rps5) (Mus musculus (Mouse)).